The sequence spans 136 residues: Ubiquinol-cytochrome c reductase complex assembly factor 2 (136 aa).

The N-terminal 13 residues, 1–13 (MAALRYRRFLKLC), are a transit peptide targeting the mitochondrion.

As to quaternary structure, interacts with UQCC1. Forms a complex, named COMB/coordinator of mitochondrial CYTB biogenesis, composed of UQCC1, UQCC2, UQCC4, UQCC5 and UQCC6; stabilizes nascent cytochrome b/MT-CYB and promotes its membrane insertion. Forms a complex, named COMA, composed of UQCC1, UQCC2 and UQCC4; activates MT-CYB translation. Forms a complex, named COMC, composed of UQCC1, UQCC2; UQCC3 and UQCC4; mediates MT-CYB hemylation and association with the first nuclear-encoded CIII subunit UQCRQ. In terms of tissue distribution, widely expressed with highest levels in brain, liver, kidney, heart, skeletal muscle, thymus, testis and pancreas (at protein level).

It is found in the mitochondrion matrix. Its subcellular location is the mitochondrion nucleoid. The protein localises to the mitochondrion. The protein resides in the mitochondrion intermembrane space. It localises to the mitochondrion inner membrane. Required for the assembly of the ubiquinol-cytochrome c reductase complex (mitochondrial respiratory chain complex III or cytochrome b-c1 complex). Plays a role in the modulation of respiratory chain activities such as oxygen consumption and ATP production and via its modulation of the respiratory chain activity can regulate skeletal muscle differentiation and insulin secretion by pancreatic beta-cells. Involved in cytochrome b translation and/or stability. The chain is Ubiquinol-cytochrome c reductase complex assembly factor 2 (Uqcc2) from Mus musculus (Mouse).